We begin with the raw amino-acid sequence, 327 residues long: MHQGVITFSRNVFLPLTTVCQNHCGYCSFWTPIQKGCIMGREQVIETLRLGAGAGCTEALFTFGERPEMVPGFSEHLAAIGYSSILDYCYDLCKEALRFGILPHTNAGVLSTGEMERLREVNASMGLMLETTADVPAHQGSIGKSPAERLSMIARAGKLRIPFTTGILLGIGETTRDREESLEAIADLQREYGHIQEVIVQNFCPKEGTPMADVTPITTETFCETVRMARAILPEEVAVQVAPNLADAGVLVGCGANDLGGISPVTIDYVNPEHPWPAIDRLTEVAGDAVLRERLCIYPQYITQGWYPPSMEPLIRSLSIKIQERSL.

In terms of domain architecture, Radical SAM core spans 6 to 244 (ITFSRNVFLP…EEVAVQVAPN (239 aa)). [4Fe-4S] cluster-binding residues include Cys20, Cys24, and Cys27.

The protein belongs to the radical SAM superfamily. CofG family. As to quaternary structure, consists of two subunits, CofG and CofH. Requires [4Fe-4S] cluster as cofactor.

It catalyses the reaction 5-amino-5-(4-hydroxybenzyl)-6-(D-ribitylimino)-5,6-dihydrouracil + S-adenosyl-L-methionine = 7,8-didemethyl-8-hydroxy-5-deazariboflavin + 5'-deoxyadenosine + L-methionine + NH4(+) + H(+). It functions in the pathway cofactor biosynthesis; coenzyme F0 biosynthesis. Functionally, catalyzes the radical-mediated synthesis of 7,8-didemethyl-8-hydroxy-5-deazariboflavin from 5-amino-5-(4-hydroxybenzyl)-6-(D-ribitylimino)-5,6-dihydrouracil. In Methanosphaerula palustris (strain ATCC BAA-1556 / DSM 19958 / E1-9c), this protein is 7,8-didemethyl-8-hydroxy-5-deazariboflavin synthase.